Reading from the N-terminus, the 559-residue chain is CTP synthase (559 aa).

The interval 1-283 is amidoligase domain; it reads MSTSRTTTNN…DTFLIRRLDL (283 aa). S25 contacts CTP. S25 serves as a coordination point for UTP. ATP contacts are provided by residues 26-31 and D83; that span reads SLGKGL. Mg(2+) is bound by residues D83 and E157. Residues 164–166, 204–209, and K240 each bind CTP; these read DIE and KTKPTQ. UTP-binding positions include 204-209 and K240; that span reads KTKPTQ. The 250-residue stretch at 308 to 557 folds into the Glutamine amidotransferase type-1 domain; it reads TVGIVGKYVD…VAAALAAAVT (250 aa). G371 is a binding site for L-glutamine. The active-site Nucleophile; for glutamine hydrolysis is the C398. L-glutamine is bound by residues 399 to 402, E421, and R482; that span reads LGLQ. Residues H530 and E532 contribute to the active site.

This sequence belongs to the CTP synthase family. In terms of assembly, homotetramer.

The enzyme catalyses UTP + L-glutamine + ATP + H2O = CTP + L-glutamate + ADP + phosphate + 2 H(+). The catalysed reaction is L-glutamine + H2O = L-glutamate + NH4(+). It catalyses the reaction UTP + NH4(+) + ATP = CTP + ADP + phosphate + 2 H(+). Its pathway is pyrimidine metabolism; CTP biosynthesis via de novo pathway; CTP from UDP: step 2/2. Allosterically activated by GTP, when glutamine is the substrate; GTP has no effect on the reaction when ammonia is the substrate. The allosteric effector GTP functions by stabilizing the protein conformation that binds the tetrahedral intermediate(s) formed during glutamine hydrolysis. Inhibited by the product CTP, via allosteric rather than competitive inhibition. Catalyzes the ATP-dependent amination of UTP to CTP with either L-glutamine or ammonia as the source of nitrogen. Regulates intracellular CTP levels through interactions with the four ribonucleotide triphosphates. The protein is CTP synthase of Corynebacterium efficiens (strain DSM 44549 / YS-314 / AJ 12310 / JCM 11189 / NBRC 100395).